A 385-amino-acid chain; its full sequence is Leucine aminopeptidase 1 (385 aa).

The signal sequence occupies residues 1-19; the sequence is MKFPSFLSLGIAASTTALA. The propeptide occupies 20–87; sequence ALPDQKPIGD…FPRAFAKTAV (68 aa). A glycan (N-linked (GlcNAc...) asparagine) is linked at Asn177. 2 residues coordinate Zn(2+): His185 and Asp204. A glycan (N-linked (GlcNAc...) asparagine) is linked at Asn229. Positions 243 and 270 each coordinate Zn(2+). Cys319 and Cys323 form a disulfide bridge. His352 provides a ligand contact to Zn(2+).

Belongs to the peptidase M28 family. M28E subfamily. As to quaternary structure, monomer. Zn(2+) is required as a cofactor.

It is found in the secreted. Its function is as follows. Extracellular aminopeptidase that allows assimilation of proteinaceous substrates. The sequence is that of Leucine aminopeptidase 1 (LAP1) from Ajellomyces dermatitidis (strain ER-3 / ATCC MYA-2586) (Blastomyces dermatitidis).